The following is a 559-amino-acid chain: Phenylalanine--tRNA ligase beta subunit (559 aa).

The B5 domain occupies 274 to 350 (FEPKIIDVHT…LGYGFNELPA (77 aa)). Mg(2+)-binding residues include D328, D334, E337, and N338.

The protein belongs to the phenylalanyl-tRNA synthetase beta subunit family. Type 2 subfamily. As to quaternary structure, tetramer of two alpha and two beta subunits. It depends on Mg(2+) as a cofactor.

Its subcellular location is the cytoplasm. The enzyme catalyses tRNA(Phe) + L-phenylalanine + ATP = L-phenylalanyl-tRNA(Phe) + AMP + diphosphate + H(+). This is Phenylalanine--tRNA ligase beta subunit from Methanosphaera stadtmanae (strain ATCC 43021 / DSM 3091 / JCM 11832 / MCB-3).